The following is a 71-amino-acid chain: MKQGIHPEYKEITATCSCGNVIKTRSTLGKDINLDVCGNCHPFYTGKQRVVDTGGRVERFNKRFSIPGTKK.

Zn(2+)-binding residues include Cys16, Cys18, Cys37, and Cys40.

This sequence belongs to the bacterial ribosomal protein bL31 family. Type A subfamily. As to quaternary structure, part of the 50S ribosomal subunit. Requires Zn(2+) as cofactor.

Its function is as follows. Binds the 23S rRNA. The chain is Large ribosomal subunit protein bL31 from Actinobacillus succinogenes (strain ATCC 55618 / DSM 22257 / CCUG 43843 / 130Z).